The following is a 159-amino-acid chain: Deoxyuridine 5'-triphosphate nucleotidohydrolase (159 aa).

The dUMP site is built by Ser-79, Gly-92, Asp-95, Tyr-98, Lys-103, Arg-148, Phe-153, and Gly-154.

It belongs to the dUTPase family. In terms of assembly, homotrimer. Mg(2+) is required as a cofactor.

It carries out the reaction dUTP + H2O = dUMP + diphosphate + H(+). Its pathway is pyrimidine metabolism; dUMP biosynthesis; dUMP from dCTP (dUTP route): step 2/2. In terms of biological role, involved in nucleotide metabolism via production of dUMP, the immediate precursor of thymidine nucleotides, and decreases the intracellular concentration of dUTP so that uracil cannot be incorporated into DNA. This is Deoxyuridine 5'-triphosphate nucleotidohydrolase (DUT1) from Candida albicans (strain SC5314 / ATCC MYA-2876) (Yeast).